Consider the following 305-residue polypeptide: Mat- sexual cell fertilization-promoting factor (305 aa).

Residues 38–93 (PAKKKVNGFMGYRSYYSSMFSQLPQKERSPILTTLWQQDPFHKEWDFMCAVYSAIR) constitute a DNA-binding region (alpha box).

This sequence belongs to the MATALPHA1 family.

The protein localises to the nucleus. Functionally, controls fertilization, probably by determining the mating type. May be involved in the post-fertilization steps of the sexual cycle besides mat+. It is required for the developmental events that occur in the female organ after fertilization. This Podospora anserina (Pleurage anserina) protein is Mat- sexual cell fertilization-promoting factor (FMR1).